Here is a 279-residue protein sequence, read N- to C-terminus: S-methyl-5'-thioadenosine phosphorylase (279 aa).

Phosphate is bound by residues Ser-28, Arg-70–His-71, and Ser-103–Ala-104. Met-202 lines the substrate pocket. Thr-203 contacts phosphate. Asp-226 to Asp-228 lines the substrate pocket.

The protein belongs to the PNP/MTAP phosphorylase family. MTAP subfamily. As to quaternary structure, homohexamer. Dimer of a homotrimer.

The catalysed reaction is S-methyl-5'-thioadenosine + phosphate = 5-(methylsulfanyl)-alpha-D-ribose 1-phosphate + adenine. The protein operates within amino-acid biosynthesis; L-methionine biosynthesis via salvage pathway; S-methyl-5-thio-alpha-D-ribose 1-phosphate from S-methyl-5'-thioadenosine (phosphorylase route): step 1/1. In terms of biological role, catalyzes the reversible phosphorylation of S-methyl-5'-thioadenosine (MTA) to adenine and 5-methylthioribose-1-phosphate. Involved in the breakdown of MTA, a major by-product of polyamine biosynthesis. Responsible for the first step in the methionine salvage pathway after MTA has been generated from S-adenosylmethionine. Has broad substrate specificity with 6-aminopurine nucleosides as preferred substrates. This chain is S-methyl-5'-thioadenosine phosphorylase, found in Pyrobaculum aerophilum (strain ATCC 51768 / DSM 7523 / JCM 9630 / CIP 104966 / NBRC 100827 / IM2).